The chain runs to 999 residues: Sarcoplasmic/endoplasmic reticulum calcium ATPase 3 (999 aa).

Over 1 to 48 (MEAAHSVPVQDVLSRFGVAESCGLSPEQVRRNREKYGPNELPAEERKS) the chain is Cytoplasmic. Residues 49 to 69 (LWELVLEQFEDLLVRILLMAA) form a helical membrane-spanning segment. Residues 70 to 89 (FLSFILAWFEEGEESTTAFV) are Lumenal-facing. The helical transmembrane segment at 90–110 (EPIVIIMILIANAVVGVWQER) threads the bilayer. The Cytoplasmic portion of the chain corresponds to 111 to 253 (NAESAIEALK…PEKTPLQQKL (143 aa)). The helical transmembrane segment at 254-273 (DEFSQQLSKVIFLVCIAVWV) threads the bilayer. The Lumenal segment spans residues 274–295 (INISHFSDPVHGGSWFRGAIYY). The helical transmembrane segment at 296–313 (FKTSVALAVAAIPEGLPA) threads the bilayer. Ca(2+) contacts are provided by Val304, Ala305, Ile307, and Glu309. At 314–757 (VITTCLALGT…EEGRAIYNNM (444 aa)) the chain is on the cytoplasmic side. Asp351 functions as the 4-aspartylphosphate intermediate in the catalytic mechanism. Asp351 and Thr353 together coordinate Mg(2+). Residue Thr353 participates in ATP binding. Residues 370 to 400 (EKVEGTQCSLHEFSITGSTYAPEGQILKDEK) form an interaction with phospholamban 1 region. Glu442, Arg489, Lys515, Arg560, Thr625, Gly626, Asp627, Arg678, and Lys684 together coordinate ATP. Asp703 lines the Mg(2+) pocket. Asn706 contacts ATP. Residues 758-777 (KQFIRYLISSNVGEVVCIFL) traverse the membrane as a helical segment. Asn768 and Glu771 together coordinate Ca(2+). The Lumenal segment spans residues 778 to 787 (TAILGLPEAL). The helical transmembrane segment at 788–808 (IPVQLLWVNLVTDGLPATALG) threads the bilayer. Residues 788–808 (IPVQLLWVNLVTDGLPATALG) form an interaction with phospholamban 2 region. Asn796, Thr799, and Asp800 together coordinate Ca(2+). The Cytoplasmic portion of the chain corresponds to 809-828 (FNPPDLDIMDKLPRNPKEPL). The chain crosses the membrane as a helical span at residues 829 to 851 (ISGWLFFRYLAIGVYVGLATVGA). Residues 852–897 (ATWWFLYDAEGPQVSFHQLRNFMRCTEDNPIFEGVNCEIFESRYPT) are Lumenal-facing. Residues 898–917 (TMALSVLVTIEMCNALNSVS) traverse the membrane as a helical segment. Glu908 lines the Ca(2+) pocket. Residues 918 to 930 (ENQSLLRMPPWLN) lie on the Cytoplasmic side of the membrane. The helical transmembrane segment at 931–949 (IWLLGAIVMSMALHFFILY) threads the bilayer. Topologically, residues 950 to 964 (VKPMPLIFQVTPLSW) are lumenal. Residues 965–985 (PQWVVVLKISLPVILLDEGLK) traverse the membrane as a helical segment. The Cytoplasmic segment spans residues 986–999 (YLSRNHLEGEEDKK).

The protein belongs to the cation transport ATPase (P-type) (TC 3.A.3) family. Type IIA subfamily. Interacts with sarcolipin (SLN). Interacts with phospholamban (PLN). Interacts with myoregulin (MRLN). Interacts with DWORF. Mg(2+) serves as cofactor. Found in spleen, lung, intestine and brain.

The protein localises to the endoplasmic reticulum membrane. The protein resides in the sarcoplasmic reticulum membrane. The enzyme catalyses Ca(2+)(in) + ATP + H2O = Ca(2+)(out) + ADP + phosphate + H(+). With respect to regulation, inhibited by sarcolipin (SLN), phospholamban (PLN) and myoregulin (MRLN). Enhanced by DWORF; DWORF increases activity by displacing sarcolipin (SLN), phospholamban (PLN) and myoregulin (MRLN). Functionally, this magnesium-dependent enzyme catalyzes the hydrolysis of ATP coupled with the transport of calcium. Transports calcium ions from the cytosol into the sarcoplasmic/endoplasmic reticulum lumen. Contributes to calcium sequestration involved in muscular excitation/contraction. The polypeptide is Sarcoplasmic/endoplasmic reticulum calcium ATPase 3 (ATP2A3) (Gallus gallus (Chicken)).